Reading from the N-terminus, the 74-residue chain is Protein kish-B (74 aa).

The N-terminal stretch at 1–22 (MTNVYSLDGILVFGLLFVCTCA) is a signal peptide. Topologically, residues 23 to 52 (YFKKVPRLKTWLLSEKKGVWGVFYKAAVIG) are extracellular. A helical membrane pass occupies residues 53 to 73 (TRLHAAVAIACVVMAFYVLFI). A topological domain (cytoplasmic) is located at residue Lys-74.

The protein belongs to the KISH family.

It localises to the golgi apparatus membrane. Involved in the early part of the secretory pathway. The sequence is that of Protein kish-B (TMEM167B) from Homo sapiens (Human).